The primary structure comprises 385 residues: UPF0744 protein YSC83 (385 aa).

It belongs to the UPF0744 family.

The protein localises to the mitochondrion outer membrane. In Saccharomyces cerevisiae (strain ATCC 204508 / S288c) (Baker's yeast), this protein is UPF0744 protein YSC83 (YSC83).